Here is an 834-residue protein sequence, read N- to C-terminus: Protein translocase subunit SecA (834 aa).

ATP contacts are provided by residues glutamine 85, 103-107, and aspartate 491; that span reads GEGKT. Zn(2+) contacts are provided by cysteine 818, cysteine 820, cysteine 829, and cysteine 830.

This sequence belongs to the SecA family. Monomer and homodimer. Part of the essential Sec protein translocation apparatus which comprises SecA, SecYEG and auxiliary proteins SecDF. Other proteins may also be involved. It depends on Zn(2+) as a cofactor.

Its subcellular location is the cell membrane. The protein resides in the cytoplasm. It catalyses the reaction ATP + H2O + cellular proteinSide 1 = ADP + phosphate + cellular proteinSide 2.. Functionally, part of the Sec protein translocase complex. Interacts with the SecYEG preprotein conducting channel. Has a central role in coupling the hydrolysis of ATP to the transfer of proteins into and across the cell membrane, serving as an ATP-driven molecular motor driving the stepwise translocation of polypeptide chains across the membrane. The chain is Protein translocase subunit SecA from Clostridium kluyveri (strain ATCC 8527 / DSM 555 / NBRC 12016 / NCIMB 10680 / K1).